We begin with the raw amino-acid sequence, 668 residues long: Fructose-1,6-bisphosphatase class 3 (668 aa).

The protein belongs to the FBPase class 3 family. The cofactor is Mn(2+).

The catalysed reaction is beta-D-fructose 1,6-bisphosphate + H2O = beta-D-fructose 6-phosphate + phosphate. The protein operates within carbohydrate biosynthesis; gluconeogenesis. The protein is Fructose-1,6-bisphosphatase class 3 of Clostridium botulinum (strain Loch Maree / Type A3).